Here is a 226-residue protein sequence, read N- to C-terminus: MKIRCLHDWNVSLEEAADIQRTLKGMLSFEFPAKKVSIVAGVDVSFPQKNLGLCVIVVMDDTLKVIESVYHTQEVHIPYVSGFLSFREGPIFIETVKKLKIVPDLFFFDGQGIAHPRGLGIAAHMGLLLEKPSLGVAKSHLFGSYNEPGRNKGDFSYMYNKTGEIIGTVLRTKKNTKPVFVSPGHMMDVDTAMSLTLKYTGKYRLPEPTRQAHILTQRLRKNHLLR.

The Mg(2+) site is built by Asp43 and Asp109.

Belongs to the endonuclease V family. It depends on Mg(2+) as a cofactor.

It localises to the cytoplasm. It carries out the reaction Endonucleolytic cleavage at apurinic or apyrimidinic sites to products with a 5'-phosphate.. In terms of biological role, DNA repair enzyme involved in the repair of deaminated bases. Selectively cleaves double-stranded DNA at the second phosphodiester bond 3' to a deoxyinosine leaving behind the intact lesion on the nicked DNA. The sequence is that of Endonuclease V from Kosmotoga olearia (strain ATCC BAA-1733 / DSM 21960 / TBF 19.5.1).